The primary structure comprises 78 residues: Large ribosomal subunit protein bL28 (78 aa).

The disordered stretch occupies residues 1 to 23; that stretch reads MSRICQITGKKPLSGNKRSHSMN.

This sequence belongs to the bacterial ribosomal protein bL28 family.

The protein is Large ribosomal subunit protein bL28 of Wigglesworthia glossinidia brevipalpis.